Here is a 240-residue protein sequence, read N- to C-terminus: Histidinol dehydrogenase homolog oryD (240 aa).

Zn(2+) contacts are provided by Gln64 and His67. The active-site Proton acceptor is Glu134. The Zn(2+) site is built by Asp168 and His228.

It belongs to the histidinol dehydrogenase family. Zn(2+) serves as cofactor.

It functions in the pathway secondary metabolite biosynthesis. Its function is as follows. Histidinol dehydrogenase homolog; part of the gene cluster that mediates the biosynthesis of oryzines, natural products with an unusual maleidride backbone. The two subunits of the fungal fatty acid synthase oryfasA and oryfasB probably form octenoic acid. This fatty acid is most likely activated by the acyl-CoA ligase oryP to give octenyl-CoA before the citrate synthase-like protein oryE catalyzes condensation with oxaloacetate to form tricarboxylic acid. The next steps of the pathways are conjectural, but a favorite possible route has been proposed, beginning with decarboxylation and concomitant dehydration by the decarboxylase oryM, followed by tautomerization, which may lead to the production of a diene intermediate. Reduction of this diene intermediate could give the known metabolite piliformic acid. On the pathway to oryzine B and oryzine A, however, hydroxylation of the diene by the alpha-ketoglutarate-dependent dioxygenase oryG and lactonisation by the lactonohydrolases oryH or oryL could give oryzine B directly. Finally, enoyl reduction by the dehydrogenase oryD would then convert oryzine B into oryzine A. The sequence is that of Histidinol dehydrogenase homolog oryD from Aspergillus oryzae (strain ATCC 42149 / RIB 40) (Yellow koji mold).